The chain runs to 190 residues: DNA-invertase hin (190 aa).

In terms of domain architecture, Resolvase/invertase-type recombinase catalytic spans 2-135 (ATIGYIRVST…AGLAAARAQG (134 aa)). Ser-10 acts as the O-(5'-phospho-DNA)-serine intermediate in catalysis. The H-T-H motif DNA-binding region spans 162 to 181 (RQQLAIIFGIGVSTLYRYFP).

The protein belongs to the site-specific recombinase resolvase family.

Functionally, a DNA fragment of approximately 900 base pairs, adjacent to the fljB (H2) gene, which specifies the synthesis of phase-2 flagellin, can exist in either orientation with respect to fljB. The orientation of the inversion region controls expression of fljB. The hin gene occupies about two-thirds of the inversion region; it is required for the inversion of the fljB controlling region. The chain is DNA-invertase hin (hin) from Salmonella typhimurium (strain LT2 / SGSC1412 / ATCC 700720).